The chain runs to 258 residues: Snake venom serine protease 3 (258 aa).

The first 18 residues, 1-18 (MVLIRVLANLLILQLSYA), serve as a signal peptide directing secretion. Residues 19–24 (QKSSEL) constitute a propeptide that is removed on maturation. A Peptidase S1 domain is found at 25 to 249 (IIGGHPCNIN…YTDWIQSIIA (225 aa)). 6 cysteine pairs are disulfide-bonded: cysteine 31–cysteine 163, cysteine 50–cysteine 66, cysteine 98–cysteine 256, cysteine 142–cysteine 210, cysteine 174–cysteine 189, and cysteine 200–cysteine 225. N-linked (GlcNAc...) asparagine glycosylation is present at asparagine 44. Residues histidine 65 and aspartate 110 each act as charge relay system in the active site. Serine 204 serves as the catalytic Charge relay system. An N-linked (GlcNAc...) asparagine glycan is attached at asparagine 239.

Belongs to the peptidase S1 family. Snake venom subfamily. As to quaternary structure, monomer. Expressed by the venom gland.

It is found in the secreted. Functionally, snake venom serine protease that may act in the hemostasis system of the prey. This Protobothrops jerdonii (Jerdon's pitviper) protein is Snake venom serine protease 3.